Consider the following 429-residue polypeptide: S-adenosylmethionine synthase (429 aa).

Residue H14 participates in ATP binding. A Mg(2+)-binding site is contributed by D16. A K(+)-binding site is contributed by E42. L-methionine-binding residues include E55 and Q98. The flexible loop stretch occupies residues 98–108; sequence QSADINRGVDR. ATP is bound by residues 165–167, 252–253, D261, 267–268, A284, and K288; these read DAK, KF, and RK. D261 contacts L-methionine. An L-methionine-binding site is contributed by K292.

Belongs to the AdoMet synthase family. As to quaternary structure, homotetramer; dimer of dimers. Requires Mg(2+) as cofactor. K(+) is required as a cofactor.

The protein localises to the cytoplasm. The enzyme catalyses L-methionine + ATP + H2O = S-adenosyl-L-methionine + phosphate + diphosphate. Its pathway is amino-acid biosynthesis; S-adenosyl-L-methionine biosynthesis; S-adenosyl-L-methionine from L-methionine: step 1/1. In terms of biological role, catalyzes the formation of S-adenosylmethionine (AdoMet) from methionine and ATP. The overall synthetic reaction is composed of two sequential steps, AdoMet formation and the subsequent tripolyphosphate hydrolysis which occurs prior to release of AdoMet from the enzyme. The polypeptide is S-adenosylmethionine synthase (Porphyromonas gingivalis (strain ATCC BAA-308 / W83)).